The sequence spans 121 residues: Small ribosomal subunit protein uS13 (121 aa).

Positions 96–121 are disordered; that stretch reads PVRGQNTKNNARTRKGKAVAIAGKKK. The segment covering 106 to 121 has biased composition (basic residues); the sequence is ARTRKGKAVAIAGKKK.

The protein belongs to the universal ribosomal protein uS13 family. Part of the 30S ribosomal subunit. Forms a loose heterodimer with protein S19. Forms two bridges to the 50S subunit in the 70S ribosome.

Its function is as follows. Located at the top of the head of the 30S subunit, it contacts several helices of the 16S rRNA. In the 70S ribosome it contacts the 23S rRNA (bridge B1a) and protein L5 of the 50S subunit (bridge B1b), connecting the 2 subunits; these bridges are implicated in subunit movement. Contacts the tRNAs in the A and P-sites. The sequence is that of Small ribosomal subunit protein uS13 from Streptococcus gordonii (strain Challis / ATCC 35105 / BCRC 15272 / CH1 / DL1 / V288).